The primary structure comprises 102 residues: U3-aranetoxin-Ce1a (102 aa).

Residues 1–21 form the signal peptide; sequence MKHLSIFFVFFCCICVMLCDA.

The protein belongs to the neurotoxin 20 family. As to expression, expressed by the venom gland.

Its subcellular location is the secreted. In Caerostris extrusa (Bark spider), this protein is U3-aranetoxin-Ce1a.